We begin with the raw amino-acid sequence, 120 residues long: Crustacean hyperglycemic hormones 1 (120 aa).

Positions 1–24 (MIAFRAVWSALLASLLLLLLAPSA) are cleaved as a signal peptide. Disulfide bonds link Cys-53–Cys-89, Cys-69–Cys-85, and Cys-72–Cys-98. The residue at position 118 (Val-118) is a Valine amide.

The protein belongs to the arthropod CHH/MIH/GIH/VIH hormone family. In terms of tissue distribution, produced by the medulla terminalis X-organ in the eyestalks and transported to the sinus gland where they are stored and released.

Its subcellular location is the secreted. Its function is as follows. Hormone found in the sinus gland of isopods and decapods which controls the blood sugar level. Has a secretagogue action over the amylase released from the midgut gland. May act as a stress hormone and may be involved in the control of molting and reproduction. This chain is Crustacean hyperglycemic hormones 1, found in Penaeus japonicus (Kuruma prawn).